Here is a 37-residue protein sequence, read N- to C-terminus: Large ribosomal subunit protein bL36c (37 aa).

The protein belongs to the bacterial ribosomal protein bL36 family.

Its subcellular location is the plastid. The protein resides in the chloroplast. This Cyanidioschyzon merolae (strain NIES-3377 / 10D) (Unicellular red alga) protein is Large ribosomal subunit protein bL36c.